The chain runs to 225 residues: Transmembrane emp24 domain-containing protein p24delta11 (225 aa).

The signal sequence occupies residues 1–35 (MDLLPSRYKIHKTKLRWILTMMTMMMMMVMRRGES). At 36 to 193 (MRLDMESGNT…ELNRSTNSRM (158 aa)) the chain is on the lumenal side. The GOLD domain occupies 45–160 (TKCISDDIKT…ITMLEVEVRK (116 aa)). Residues 175-188 (LIEREREMQELNRS) are a coiled coil. Residue Arg-178 is modified to Omega-N-methylated arginine. Asn-186 carries an N-linked (GlcNAc...) asparagine glycan. Residues 194–210 (AALSLLSFVVTMSVAGL) traverse the membrane as a helical segment. The Cytoplasmic segment spans residues 211-225 (QLRHLKSFLERKKLL). The COPII vesicle coat-binding motif lies at 218–219 (FL). A COPI vesicle coat-binding motif is present at residues 218–225 (FLERKKLL).

It belongs to the EMP24/GP25L family. Probably oligomerizes with other members of the EMP24/GP25L family. Associates with the COPI vesicle coat (coatomer). Associates with the COPII vesicle coat (coatomer).

The protein localises to the endoplasmic reticulum membrane. Its subcellular location is the golgi apparatus. It is found in the cis-Golgi network membrane. The protein resides in the golgi stack membrane. Involved in vesicular protein trafficking. Mainly functions in the early secretory pathway. Thought to act as cargo receptor at the lumenal side for incorporation of secretory cargo molecules into transport vesicles and to be involved in vesicle coat formation at the cytoplasmic side. The polypeptide is Transmembrane emp24 domain-containing protein p24delta11 (Arabidopsis thaliana (Mouse-ear cress)).